Here is a 312-residue protein sequence, read N- to C-terminus: Mas-related G-protein coupled receptor member E (312 aa).

Topologically, residues 1–20 (MMEPREAGQHVGAANGAQED) are extracellular. A helical transmembrane segment spans residues 21–41 (VAFNLIILSLTEGLGLGGLLG). Residues 42–59 (NGAVLWLLSSNVYRNPFA) lie on the Cytoplasmic side of the membrane. A helical transmembrane segment spans residues 60 to 80 (IYLLDVACADLIFLGCHMVAI). The Extracellular portion of the chain corresponds to 81–106 (VPDLLQGRLDFPGFVQTSLATLRFFC). The helical transmembrane segment at 107-127 (YIVGLSLLAAVSVEQCLAALF) threads the bilayer. The Cytoplasmic segment spans residues 128-141 (PAWYSCRRPRHLTT). Residues 142 to 162 (CVCALTWALCLLLHLLLSGAC) form a helical membrane-spanning segment. The Extracellular segment spans residues 163-176 (TQFFGEPSRHLCRT). Residues 177–197 (LWLVAAVLLALLCCTMCGASL) form a helical membrane-spanning segment. The Cytoplasmic portion of the chain corresponds to 198-217 (MLLLRVERGPQRPPPRGFPG). A helical transmembrane segment spans residues 218-238 (LILLTVLLFLFCGLPFGIYWL). At 239–241 (SRN) the chain is on the extracellular side. A helical transmembrane segment spans residues 242 to 262 (LLWYIPHYFYHFSFLMAAVHC). Residues 263–312 (AAKPVVYFCLGSAQGRRLPLRLVLQRALGDEAELGAVRETSRRGLVDIAA) are Cytoplasmic-facing.

Belongs to the G-protein coupled receptor 1 family. Mas subfamily.

It localises to the cell membrane. Its function is as follows. Orphan receptor. May regulate nociceptor function and/or development, including the sensation or modulation of pain. The chain is Mas-related G-protein coupled receptor member E (MRGPRE) from Homo sapiens (Human).